The primary structure comprises 824 residues: Leucine--tRNA ligase (824 aa).

A 'HIGH' region motif is present at residues 42–52 (PYPSGRIHMGH). The 'KMSKS' region signature appears at 581–585 (KMSKS). Residue Lys-584 participates in ATP binding.

It belongs to the class-I aminoacyl-tRNA synthetase family.

It localises to the cytoplasm. The catalysed reaction is tRNA(Leu) + L-leucine + ATP = L-leucyl-tRNA(Leu) + AMP + diphosphate. In Geobacter sulfurreducens (strain ATCC 51573 / DSM 12127 / PCA), this protein is Leucine--tRNA ligase.